We begin with the raw amino-acid sequence, 186 residues long: Cytochrome b6-f complex iron-sulfur subunit (186 aa).

The chain crosses the membrane as a helical span at residues 16–38 (LLSFVTGGAIAATTAATLYPVVL). Positions 74 to 163 (GEPVLTLGLD…ATVSDDKVLI (90 aa)) constitute a Rieske domain. Positions 109, 111, 127, and 130 each coordinate [2Fe-2S] cluster. Cys-114 and Cys-129 are oxidised to a cystine.

This sequence belongs to the Rieske iron-sulfur protein family. In terms of assembly, the 4 large subunits of the cytochrome b6-f complex are cytochrome b6, subunit IV (17 kDa polypeptide, PetD), cytochrome f and the Rieske protein, while the 4 small subunits are PetG, PetL, PetM and PetN. The complex functions as a dimer. [2Fe-2S] cluster is required as a cofactor.

The protein resides in the cell inner membrane. It carries out the reaction 2 oxidized [plastocyanin] + a plastoquinol + 2 H(+)(in) = 2 reduced [plastocyanin] + a plastoquinone + 4 H(+)(out). Its function is as follows. Component of the cytochrome b6-f complex, which mediates electron transfer between photosystem II (PSII) and photosystem I (PSI), cyclic electron flow around PSI, and state transitions. The chain is Cytochrome b6-f complex iron-sulfur subunit from Gloeobacter violaceus (strain ATCC 29082 / PCC 7421).